A 762-amino-acid polypeptide reads, in one-letter code: 1-phosphatidylinositol 4,5-bisphosphate phosphodiesterase delta-4 (762 aa).

In terms of domain architecture, PH spans 16–124 (LLMQEGMPMR…WMRGLQLLVD (109 aa)). The tract at residues 26–53 (KVRSKSWKKLRYFRLQNDGMTVWHARQA) is substrate binding. EF-hand domains are found at residues 134-169 (RLDQWLSDWFQRGDKNQDGKMSFQEVQRLLHLMNVE), 170-205 (MDQEYAFSLFQAADTSQSGTLEGEEFVQFYKALTKR), and 206-237 (AEVQELFESFSADGQKLTLLEFLDFLREEQKE). 10 residues coordinate Ca(2+): Asp-147, Asn-149, Asp-151, Lys-153, Glu-158, Asp-183, Ser-185, Ser-187, Thr-189, and Glu-194. Positions 213-243 (ESFSADGQKLTLLEFLDFLREEQKERDCTSE) match the GBA motif. The PI-PLC X-box domain occupies 290–435 (QDMTQPLNHY…LRRRILVKGK (146 aa)). His-305 is a catalytic residue. 3 residues coordinate Ca(2+): Asn-306, Glu-335, and Asp-337. His-350 is an active-site residue. Glu-384 contributes to the Ca(2+) binding site. The substrate site is built by Lys-433 and Lys-435. Over residues 443–471 (LEYEEEEAEPELEESELALESQFETEPEP) the composition is skewed to acidic residues. Residues 443–483 (LEYEEEEAEPELEESELALESQFETEPEPQEQNLQSKDKKK) are disordered. The residue at position 457 (Ser-457) is a Phosphoserine. The PI-PLC Y-box domain occupies 493-609 (LSSLVIYLKS…GYVLKPDFLR (117 aa)). Substrate-binding residues include Ser-522 and Arg-549. The C2 domain occupies 609–736 (RDIQSSFHPE…QGYRHIHLLS (128 aa)). Ca(2+) is bound by residues Ile-650, Asp-652, Asn-676, Asp-705, Tyr-706, and Asp-707. A PDZ-binding motif is present at residues 731 to 734 (HIHL).

In terms of assembly, interacts with GRIP1. Interacts (via GBA motif) with guanine nucleotide-binding protein G(i) alpha subunit GNAI3 (inactive GDP-bound form); low-affinity interaction. Ca(2+) is required as a cofactor.

The protein localises to the membrane. The protein resides in the nucleus. Its subcellular location is the cytoplasm. It localises to the endoplasmic reticulum. The catalysed reaction is a 1,2-diacyl-sn-glycero-3-phospho-(1D-myo-inositol-4,5-bisphosphate) + H2O = 1D-myo-inositol 1,4,5-trisphosphate + a 1,2-diacyl-sn-glycerol + H(+). It catalyses the reaction a 1,2-diacyl-sn-glycero-3-phospho-(1D-myo-inositol) + H2O = 1D-myo-inositol 1-phosphate + a 1,2-diacyl-sn-glycerol + H(+). In terms of biological role, hydrolyzes the phosphatidylinositol 4,5-bisphosphate (PIP2) to generate 2 second messenger molecules diacylglycerol (DAG) and inositol 1,4,5-trisphosphate (IP3). DAG mediates the activation of protein kinase C (PKC), while IP3 releases Ca(2+) from intracellular stores. Required for acrosome reaction in sperm during fertilization, probably by acting as an important enzyme for intracellular Ca(2+) mobilization in the zona pellucida-induced acrosome reaction. May play a role in cell growth. Modulates the liver regeneration in cooperation with nuclear PKC. Overexpression up-regulates the Erk signaling pathway and proliferation. The polypeptide is 1-phosphatidylinositol 4,5-bisphosphate phosphodiesterase delta-4 (PLCD4) (Pongo abelii (Sumatran orangutan)).